A 678-amino-acid polypeptide reads, in one-letter code: MRSPLLASLFALALSIASSEAAISSTEQVPLSGSVPQLDHSELQNVRINKKRPLKGRFLHITDIHPDPHYKTGSTFDSGCHRKPKKDGKSEGKKATENERGNEDLDDKEFDTLIKNEDLAGKWGTAVSDCDCPMSLVNITFDWLKEEWANEVDFVVWTGDNARHDIDRRIPRTPKEIFDSNRMIVDRMLDAFGRDMPIVPSIGNNDIYPHNVLAAGPSRITEEFLLIWKHFIPSEAAHVFERGAYFSVEVIPDRLAVISLNTLFWYDANTLVDGCRDHSNDPGALEMDWLEVQLNNFRQRGMQVWLTGHVPPHMNHYYDNCYLRYGDLALRYQDTIVGHLFGHMNVDHFFFIDVDELEATSELTSTSSNTTLSDLPLLHGPRLPRPGPGKYTAMGRSGARKLEEELRKDFGQMPGPGILKLKDYAVMNVAPSVIPTYYPGIRIFSYNISDEEDSFDQGHSYQGADELLDDEDEGDELEELELPSDNGFFGGLDERENEDIEILKGSGGHRHDVPKGDCSLPSNEDKPHCTFKRKPRHYSKRSPSRTNRALSPLGYTQFYLPSMMKQKKRPKWEVEYTTYKVKTLVPSSPENTTQPLPVPLHLLPRYDPSIFSKPKNKTEEKEVAKKTAKFYKAVKAVTPYRMKDLTIGSWVKLARMLVLEKKRWKKFAELMLVSTETD.

The Cytoplasmic portion of the chain corresponds to 1 to 2 (MR). Residues 3 to 23 (SPLLASLFALALSIASSEAAI) traverse the membrane as a helical; Signal-anchor for type II membrane protein segment. Over 24-678 (SSTEQVPLSG…ELMLVSTETD (655 aa)) the chain is Vacuolar. The tract at residues 70–109 (YKTGSTFDSGCHRKPKKDGKSEGKKATENERGNEDLDDKE) is disordered. Basic and acidic residues predominate over residues 87-103 (DGKSEGKKATENERGNE). N-linked (GlcNAc...) asparagine glycosylation is found at Asn138, Asn369, and Asn447. The interval 504–547 (KGSGGHRHDVPKGDCSLPSNEDKPHCTFKRKPRHYSKRSPSRTN) is disordered. The span at 529–543 (CTFKRKPRHYSKRSP) shows a compositional bias: basic residues. Residues Asn591 and Asn616 are each glycosylated (N-linked (GlcNAc...) asparagine).

This sequence belongs to the endopolyphosphatase PPN1 family. Requires a divalent metal cation as cofactor. In terms of processing, processing by proteases in the vacuole may be required for activation.

Its subcellular location is the vacuole membrane. It carries out the reaction [phosphate](n+1) + n H2O = (n+1) phosphate + n H(+). In terms of biological role, catalyzes the hydrolysis of inorganic polyphosphate (polyP) chains of many hundreds of phosphate residues into shorter lengths. This is Endopolyphosphatase (PPN1) from Cryptococcus neoformans var. neoformans serotype D (strain JEC21 / ATCC MYA-565) (Filobasidiella neoformans).